Consider the following 113-residue polypeptide: U11-theraphotoxin-Hhn1h (113 aa).

Positions 1–21 (MNTVRVTFLLVFVLVVSLGQA) are cleaved as a signal peptide. Positions 22–74 (DKDENRMEMQEKTEQGKSYLDFAENLLLQKLEELEAKLLEEDSEESRNSRQKR) are excised as a propeptide. The segment at 61-83 (EEDSEESRNSRQKRRIGEGVPCD) is disordered. 2 disulfide bridges follow: C82–C95 and C89–C110.

Belongs to the neurotoxin 14 (magi-1) family. 01 (HNTX-16) subfamily. Expressed by the venom gland.

Its subcellular location is the secreted. Functionally, probable ion channel inhibitor. The chain is U11-theraphotoxin-Hhn1h from Cyriopagopus hainanus (Chinese bird spider).